The sequence spans 372 residues: Probable G-protein coupled receptor 45 (372 aa).

Over 1–38 the chain is Extracellular; that stretch reads MACNSTSLEAYTYLLLNTSNASDSGSTQLPAPLRISLA. Residues Asn4, Asn17, and Asn20 are each glycosylated (N-linked (GlcNAc...) asparagine). A helical membrane pass occupies residues 39–59; sequence IVMLLMTVVGFLGNTVVCIIV. At 60–75 the chain is on the cytoplasmic side; the sequence is YQRPAMRSAINLLLAT. A helical transmembrane segment spans residues 76 to 96; the sequence is LAFSDIMLSLCCMPFTAVTLI. At 97-109 the chain is on the extracellular side; sequence TVRWHFGDHFCRL. A helical transmembrane segment spans residues 110 to 130; sequence SATLYWFFVLEGVAILLIISV. Residues 131–149 lie on the Cytoplasmic side of the membrane; sequence DRFLIIVQRQDKLNPRRAK. The helical transmembrane segment at 150–170 threads the bilayer; it reads VIIAVSWVLSFCIAGPSLTGW. Topologically, residues 171–198 are extracellular; it reads TLVEVPARAPQCVLGYTELPADRAYVVT. The chain crosses the membrane as a helical span at residues 199–219; sequence LVVAVFFAPFGVMLCAYMCIL. At 220-268 the chain is on the cytoplasmic side; sequence NTVRKNAVRVHNQSDSLDLRQLTRAGLRRLQRQQQVSVDLSFKTKAFTT. The chain crosses the membrane as a helical span at residues 269 to 289; it reads ILILFVGFSLCWLPHSVYSLL. Topologically, residues 290-305 are extracellular; it reads SVFSQRFYCGSSFYAT. Residues 306–326 form a helical membrane-spanning segment; it reads STCVLWLSYLKSVFNPIVYCW. The Cytoplasmic segment spans residues 327–372; that stretch reads RIKKFREACIELLPQTFQILPKVPERIRRRIQPSTVYVCNENQSAV.

This sequence belongs to the G-protein coupled receptor 1 family. As to expression, expressed in brain; detected in the basal forebrain, frontal cortex, and caudate, but not in thalamus, hippocampus, or putamen.

Its subcellular location is the cell membrane. Functionally, orphan receptor. May play a role in brain function. This Homo sapiens (Human) protein is Probable G-protein coupled receptor 45 (GPR45).